A 115-amino-acid chain; its full sequence is U3-lycotoxin-Ls1h (115 aa).

A signal peptide spans 1-20 (MKFVLLFGVFLVTLFSYSSA). Residues 21 to 44 (EMLDDFDQADEDELLSLIEKEEAR) constitute a propeptide that is removed on maturation. 4 cysteine pairs are disulfide-bonded: Cys48-Cys63, Cys55-Cys72, Cys62-Cys87, and Cys74-Cys85.

The protein belongs to the neurotoxin 19 (CSTX) family. 01 subfamily. In terms of tissue distribution, expressed by the venom gland.

The protein resides in the secreted. This is U3-lycotoxin-Ls1h from Lycosa singoriensis (Wolf spider).